The primary structure comprises 506 residues: Histidine ammonia-lyase (506 aa).

Positions 142–144 form a cross-link, 5-imidazolinone (Ala-Gly); that stretch reads ASG. The residue at position 143 (serine 143) is a 2,3-didehydroalanine (Ser).

This sequence belongs to the PAL/histidase family. Post-translationally, contains an active site 4-methylidene-imidazol-5-one (MIO), which is formed autocatalytically by cyclization and dehydration of residues Ala-Ser-Gly.

Its subcellular location is the cytoplasm. It catalyses the reaction L-histidine = trans-urocanate + NH4(+). The protein operates within amino-acid degradation; L-histidine degradation into L-glutamate; N-formimidoyl-L-glutamate from L-histidine: step 1/3. The sequence is that of Histidine ammonia-lyase from Bacillus cereus (strain ATCC 14579 / DSM 31 / CCUG 7414 / JCM 2152 / NBRC 15305 / NCIMB 9373 / NCTC 2599 / NRRL B-3711).